A 250-amino-acid chain; its full sequence is Beta-crystallin B1 (250 aa).

The segment at 1–47 is disordered; the sequence is MSQVAKAAATTAVNPGPDGKGKGTPSTGTAPAPGPTPVPASVPRPAA. Ser-2 carries the N-acetylserine modification. The N-terminal arm stretch occupies residues 2-56; that stretch reads SQVAKAAATTAVNPGPDGKGKGTPSTGTAPAPGPTPVPASVPRPAAKVGELPPGS. The segment covering 32 to 42 has biased composition (pro residues); it reads APGPTPVPASV. 2 consecutive Beta/gamma crystallin 'Greek key' domains span residues 57–96 and 97–141; these read YRLVVFEQENFQGRRVEFSGECLNLGDRGFDRVRSLIVLS and GPWV…RPIR. The tract at residues 142–146 is connecting peptide; sequence MDSQE. 2 consecutive Beta/gamma crystallin 'Greek key' domains span residues 147–188 and 189–231; these read HKIC…TVSS and GTWV…RRLR. The segment at 233–250 is C-terminal arm; it reads RQWHQEGCFPVLTAEPPK.

It belongs to the beta/gamma-crystallin family. Homo/heterodimer, or complexes of higher-order. The structure of beta-crystallin oligomers seems to be stabilized through interactions between the N-terminal arms. In terms of processing, specific cleavages in the N-terminal arm occur during lens maturation and give rise to truncated forms, leading to impaired oligomerization and protein insolubilization. The protease responsible for this partial degradation could be calpain II.

Crystallins are the dominant structural components of the vertebrate eye lens. The chain is Beta-crystallin B1 (Crybb1) from Rattus norvegicus (Rat).